The chain runs to 262 residues: Type III pantothenate kinase (262 aa).

An ATP-binding site is contributed by 9–16 (DIGNTNVK). Substrate is bound by residues Tyr103 and 110–113 (GADR). Asp112 functions as the Proton acceptor in the catalytic mechanism. Asp134 contacts K(+). Thr137 serves as a coordination point for ATP. Thr190 serves as a coordination point for substrate.

It belongs to the type III pantothenate kinase family. As to quaternary structure, homodimer. NH4(+) serves as cofactor. Requires K(+) as cofactor.

Its subcellular location is the cytoplasm. The catalysed reaction is (R)-pantothenate + ATP = (R)-4'-phosphopantothenate + ADP + H(+). Its pathway is cofactor biosynthesis; coenzyme A biosynthesis; CoA from (R)-pantothenate: step 1/5. Catalyzes the phosphorylation of pantothenate (Pan), the first step in CoA biosynthesis. The sequence is that of Type III pantothenate kinase from Nitratidesulfovibrio vulgaris (strain DSM 19637 / Miyazaki F) (Desulfovibrio vulgaris).